Here is a 147-residue protein sequence, read N- to C-terminus: Ubiquitin-conjugating enzyme E2-16 kDa (147 aa).

One can recognise a UBC core domain in the interval 1–147 (MALKRINKEL…AREWTRKYAI (147 aa)). The Glycyl thioester intermediate role is filled by Cys-107.

Belongs to the ubiquitin-conjugating enzyme family.

The catalysed reaction is S-ubiquitinyl-[E1 ubiquitin-activating enzyme]-L-cysteine + [E2 ubiquitin-conjugating enzyme]-L-cysteine = [E1 ubiquitin-activating enzyme]-L-cysteine + S-ubiquitinyl-[E2 ubiquitin-conjugating enzyme]-L-cysteine.. Its pathway is protein modification; protein ubiquitination. Catalyzes the covalent attachment of ubiquitin to other proteins. The chain is Ubiquitin-conjugating enzyme E2-16 kDa (UBC1) from Pyricularia oryzae (strain 70-15 / ATCC MYA-4617 / FGSC 8958) (Rice blast fungus).